Reading from the N-terminus, the 1041-residue chain is DNA polymerase catalytic subunit (1041 aa).

The disordered stretch occupies residues 1-23 (MAFFNPYFKSKNKGSDMPPKQSM).

This sequence belongs to the DNA polymerase type-B family.

The protein localises to the host nucleus. The enzyme catalyses DNA(n) + a 2'-deoxyribonucleoside 5'-triphosphate = DNA(n+1) + diphosphate. The catalysed reaction is Endonucleolytic cleavage to 5'-phosphomonoester.. In terms of biological role, replicates viral genomic DNA. The replication complex is composed of six viral proteins: the DNA polymerase, processivity factor, primase, primase-associated factor, helicase, and ssDNA-binding protein. Additionally, the polymerase contains an intrinsic ribonuclease H (RNase H) activity that specifically degrades RNA/DNA heteroduplexes or duplex DNA substrates in the 5' to 3' direction. Therefore, it can catalyze the excision of the RNA primers that initiate the synthesis of Okazaki fragments at a replication fork during viral DNA replication. The polypeptide is DNA polymerase catalytic subunit (Elephantid herpesvirus 1 (isolate Asian elephant/Berlin/Kiba/1998) (EIHV-1)).